Reading from the N-terminus, the 391-residue chain is uncharacterized protein (391 aa).

One can recognise a Flavodoxin-like domain in the interval 247-387; the sequence is AVIVYATIYS…KIKEFGRKLA (141 aa).

This is an uncharacterized protein from Methanocaldococcus jannaschii (strain ATCC 43067 / DSM 2661 / JAL-1 / JCM 10045 / NBRC 100440) (Methanococcus jannaschii).